A 161-amino-acid chain; its full sequence is Phosphotransferase enzyme IIB component GlvB (161 aa).

A helical transmembrane segment spans residues 10 to 32; it reads LTQIAIGLCFTLLYFVVFRTLIL. The region spanning 70 to 152 is the PTS EIIB type-1 domain; that stretch reads LDQAAGILQA…DSLINSHQSA (83 aa). The active-site Phosphocysteine intermediate is the cysteine 92.

It is found in the cell inner membrane. In terms of biological role, the phosphoenolpyruvate-dependent sugar phosphotransferase system (sugar PTS), a major carbohydrate active -transport system, catalyzes the phosphorylation of incoming sugar substrates concomitantly with their translocation across the cell membrane. This operon may be cryptic in wild-type K12 strains. The protein is Phosphotransferase enzyme IIB component GlvB of Escherichia coli (strain K12).